The chain runs to 192 residues: Ion-translocating oxidoreductase complex subunit A (192 aa).

Helical transmembrane passes span I5–L25, I39–V59, L72–V92, L102–L122, I134–M154, and S171–V191.

It belongs to the NqrDE/RnfAE family. In terms of assembly, the complex is composed of six subunits: RnfA, RnfB, RnfC, RnfD, RnfE and RnfG.

It is found in the cell inner membrane. In terms of biological role, part of a membrane-bound complex that couples electron transfer with translocation of ions across the membrane. The sequence is that of Ion-translocating oxidoreductase complex subunit A from Vibrio vulnificus (strain CMCP6).